The sequence spans 414 residues: Enolase (414 aa).

(2R)-2-phosphoglycerate is bound at residue glutamine 162. The Proton donor role is filled by glutamate 204. 3 residues coordinate Mg(2+): aspartate 239, glutamate 280, and aspartate 307. Lysine 332, arginine 361, serine 362, and lysine 383 together coordinate (2R)-2-phosphoglycerate. Lysine 332 functions as the Proton acceptor in the catalytic mechanism.

It belongs to the enolase family. The cofactor is Mg(2+).

The protein localises to the cytoplasm. It localises to the secreted. Its subcellular location is the cell surface. The enzyme catalyses (2R)-2-phosphoglycerate = phosphoenolpyruvate + H2O. It functions in the pathway carbohydrate degradation; glycolysis; pyruvate from D-glyceraldehyde 3-phosphate: step 4/5. Functionally, catalyzes the reversible conversion of 2-phosphoglycerate (2-PG) into phosphoenolpyruvate (PEP). It is essential for the degradation of carbohydrates via glycolysis. The protein is Enolase of Campylobacter jejuni subsp. jejuni serotype O:6 (strain 81116 / NCTC 11828).